Consider the following 253-residue polypeptide: MVFFSCNNCGEACKKNQVERHLFQCRNTTFSCIDCQLVYTRETYKDHVKCITENQKYGGKNYVEKENKGEAKQNAWVDQVNRAIEFVTDSQVKELLKSVAGFANIPRKEAKFINFLTNSCRLRDKNLALRAWQAIAAEADKMREEAIRKQEETQKMEKAQKEAAAAAKKETTVATTAAEVTDAPESTFKWKKVIKRKLKENGGEMKIKKLKKAIIEELSAAGAASDDVDSIFDEKLQKCAAVTVDGKKVSLVV.

C2HC LYAR-type zinc fingers lie at residues Met1–Arg26 and Asn27–Ile51. Zn(2+) is bound by residues Cys6, Cys9, His21, Cys25, Cys32, Cys35, His47, and Cys50. Residues Ala136–Thr171 adopt a coiled-coil conformation.

The protein resides in the nucleus. This is an uncharacterized protein from Caenorhabditis elegans.